The following is a 504-amino-acid chain: PE-PGRS family protein PE_PGRS62 (504 aa).

Residues 4-94 enclose the PE domain; that stretch reads VVTVPEAVAA…AAYLNTESAN (91 aa).

This sequence belongs to the mycobacterial PE family. PGRS subfamily. As to quaternary structure, interacts with host Toll-like receptor 2 (TLR2).

It localises to the secreted. It is found in the cell wall. Supports mycobacterial virulence via inhibition of phagosome maturation and host inducible nitric oxide synthase (iNOS) expression. May promote the survival within macrophages by disturbing the cytokines profiles and blocking the endoplasmic reticulum (ER) stress-mediated apoptosis. May also affect bacterial cell wall composition. Functionally, expression in Mycobacterium smegmatis, a nonpathogenic species naturally deficient in PE_PGRS genes, results in enhanced resistance to various in vitro stresses. It also leads to phagosome maturation arrest and increased survival in macrophages. The chain is PE-PGRS family protein PE_PGRS62 from Mycobacterium tuberculosis (strain ATCC 25618 / H37Rv).